The primary structure comprises 236 residues: NAP1-binding protein 2 (236 aa).

Serine 102 bears the Phosphoserine mark. The region spanning 110-171 (IVNQRAVALY…PEEFVSYIQP (62 aa)) is the SH3 domain. Phosphoserine occurs at positions 196 and 235.

Interacts with PBS2 and PTC1.

The protein resides in the cytoplasm. Functionally, negatively regulates the high-osmolarity glycerol (HOG) pathway through its negative regulation of the HOG1 kinase activity. Mediates the binding between the PTC1 phosphatase and the PBS2 MAP/ERK kinase (MEK). With PTC1, regulates endoplasmic reticulum inheritance through the cell wall integrity (CWI) MAPK pathway by modulating the MAPK, SLT2. The protein is NAP1-binding protein 2 (NBP2) of Saccharomyces cerevisiae (strain ATCC 204508 / S288c) (Baker's yeast).